The sequence spans 891 residues: Probable serine/threonine-protein kinase mkcC (891 aa).

5 disordered regions span residues 24–70 (IELN…TATI), 85–121 (ANNNTNQLNKSTSSSSSLNNNKNEDNKSVTASIAPSS), 264–435 (DDPQ…AREK), 495–526 (NSLGSSINKNNSNNTTTTTTTTNTNNKSPEVS), and 565–588 (TTASQSSQAPYHPSHNGNEEDDYD). A compositionally biased stretch (low complexity) spans 29 to 41 (QEEQQQPEQQEQP). The segment covering 45-58 (EELKDNNEKIKTSE) has biased composition (basic and acidic residues). 5 stretches are compositionally biased toward low complexity: residues 61 to 70 (TTTTTTTATI), 86 to 105 (NNNTNQLNKSTSSSSSLNNN), 297 to 314 (STSNTTGKNTGKNSTTGK), 322 to 360 (SNSSNVPPSPVLASSASPSPKLKSSSSSIRNSGAISGTS), and 379 to 397 (TTGNSTTTTTTTTSTTTSS). The segment covering 422-432 (RKRKEQKRSRA) has biased composition (basic residues). Low complexity predominate over residues 495–522 (NSLGSSINKNNSNNTTTTTTTTNTNNKS). The Protein kinase domain occupies 616–864 (YKNLKQIGSG…AEQLLKHPWI (249 aa)). ATP-binding positions include 622–630 (IGSGGFGSV) and Lys645. Asp735 acts as the Proton acceptor in catalysis.

This sequence belongs to the protein kinase superfamily. STE Ser/Thr protein kinase family. STE20 subfamily. Mg(2+) serves as cofactor.

It catalyses the reaction L-seryl-[protein] + ATP = O-phospho-L-seryl-[protein] + ADP + H(+). The catalysed reaction is L-threonyl-[protein] + ATP = O-phospho-L-threonyl-[protein] + ADP + H(+). This chain is Probable serine/threonine-protein kinase mkcC, found in Dictyostelium discoideum (Social amoeba).